Reading from the N-terminus, the 271-residue chain is Tryptophan synthase alpha chain (271 aa).

Active-site proton acceptor residues include Glu-49 and Asp-60.

This sequence belongs to the TrpA family. As to quaternary structure, tetramer of two alpha and two beta chains.

It catalyses the reaction (1S,2R)-1-C-(indol-3-yl)glycerol 3-phosphate + L-serine = D-glyceraldehyde 3-phosphate + L-tryptophan + H2O. The protein operates within amino-acid biosynthesis; L-tryptophan biosynthesis; L-tryptophan from chorismate: step 5/5. In terms of biological role, the alpha subunit is responsible for the aldol cleavage of indoleglycerol phosphate to indole and glyceraldehyde 3-phosphate. This Burkholderia cenocepacia (strain HI2424) protein is Tryptophan synthase alpha chain.